The following is a 388-amino-acid chain: Formate-dependent phosphoribosylglycinamide formyltransferase (388 aa).

N(1)-(5-phospho-beta-D-ribosyl)glycinamide is bound by residues 20–21 (EL) and Glu-80. ATP contacts are provided by residues Arg-112, Lys-153, 158-163 (SSGKGQ), 193-196 (EEFI), and Glu-201. Residues 117-306 (RLAFEKLGLR…EFEIHARAIL (190 aa)) form the ATP-grasp domain. Residues Glu-265 and Glu-277 each contribute to the Mg(2+) site. Residues Asp-284, Lys-352, and 359–360 (RR) contribute to the N(1)-(5-phospho-beta-D-ribosyl)glycinamide site.

The protein belongs to the PurK/PurT family. Homodimer.

It catalyses the reaction N(1)-(5-phospho-beta-D-ribosyl)glycinamide + formate + ATP = N(2)-formyl-N(1)-(5-phospho-beta-D-ribosyl)glycinamide + ADP + phosphate + H(+). It participates in purine metabolism; IMP biosynthesis via de novo pathway; N(2)-formyl-N(1)-(5-phospho-D-ribosyl)glycinamide from N(1)-(5-phospho-D-ribosyl)glycinamide (formate route): step 1/1. Involved in the de novo purine biosynthesis. Catalyzes the transfer of formate to 5-phospho-ribosyl-glycinamide (GAR), producing 5-phospho-ribosyl-N-formylglycinamide (FGAR). Formate is provided by PurU via hydrolysis of 10-formyl-tetrahydrofolate. The sequence is that of Formate-dependent phosphoribosylglycinamide formyltransferase from Methanococcus maripaludis (strain DSM 14266 / JCM 13030 / NBRC 101832 / S2 / LL).